Here is a 42-residue protein sequence, read N- to C-terminus: Tachystatin-B2 (42 aa).

3 disulfide bridges follow: C4-C20, C11-C25, and C19-C37.

In terms of tissue distribution, granular hemocytes, small secretory granules.

The protein resides in the secreted. Functionally, exhibits stronger antimicrobial activity against the Gram-positive bacteria (S.aureus (IC(50) is 7.4 ug/ml)) and fungi (C.albicans (IC(50) is 3.0 ug/ml) and P.pastoris (IC(50) is 0.1 ug/ml)) than Gram-negative bacteria (E.coli no inhibition at 100 ug/ml). Binds to chitin (4.3 uM are required to obtain 50% of binding). Does not cause hemolysis on sheep erythrocytes. Has no blocking activity on the P-type calcium channel. The protein is Tachystatin-B2 of Tachypleus tridentatus (Japanese horseshoe crab).